Reading from the N-terminus, the 883-residue chain is N,N'-diacetylchitobiase (883 aa).

The N-terminal stretch at 1–17 is a signal peptide; the sequence is MLKHSLIAASVITTLAG. Cys18 carries the N-palmitoyl cysteine lipid modification. The S-diacylglycerol cysteine moiety is linked to residue Cys18. 3 disulfides stabilise this stretch: Cys54–Cys64, Cys394–Cys402, and Cys502–Cys577. Residue Glu537 is the Proton donor of the active site.

Belongs to the glycosyl hydrolase 20 family. This protein is probably a lipoprotein, its processing is inhibited by globomycin.

The protein localises to the cell outer membrane. It catalyses the reaction Hydrolysis of terminal non-reducing N-acetyl-D-hexosamine residues in N-acetyl-beta-D-hexosaminides.. It participates in glycan degradation; chitin degradation. Functionally, hydrolysis of terminal, non-reducing N-acetyl-beta-D-glucosamine residues in chitobiose and higher analogs, and in glycoproteins. The polypeptide is N,N'-diacetylchitobiase (chb) (Vibrio harveyi (Beneckea harveyi)).